We begin with the raw amino-acid sequence, 179 residues long: ATP synthase subunit delta (179 aa).

The protein belongs to the ATPase delta chain family. In terms of assembly, F-type ATPases have 2 components, F(1) - the catalytic core - and F(0) - the membrane proton channel. F(1) has five subunits: alpha(3), beta(3), gamma(1), delta(1), epsilon(1). F(0) has three main subunits: a(1), b(2) and c(10-14). The alpha and beta chains form an alternating ring which encloses part of the gamma chain. F(1) is attached to F(0) by a central stalk formed by the gamma and epsilon chains, while a peripheral stalk is formed by the delta and b chains.

Its subcellular location is the cell membrane. F(1)F(0) ATP synthase produces ATP from ADP in the presence of a proton or sodium gradient. F-type ATPases consist of two structural domains, F(1) containing the extramembraneous catalytic core and F(0) containing the membrane proton channel, linked together by a central stalk and a peripheral stalk. During catalysis, ATP synthesis in the catalytic domain of F(1) is coupled via a rotary mechanism of the central stalk subunits to proton translocation. Functionally, this protein is part of the stalk that links CF(0) to CF(1). It either transmits conformational changes from CF(0) to CF(1) or is implicated in proton conduction. This Clostridium botulinum (strain Alaska E43 / Type E3) protein is ATP synthase subunit delta.